The following is a 91-amino-acid chain: Large ribosomal subunit protein bL31B (91 aa).

Belongs to the bacterial ribosomal protein bL31 family. Type B subfamily. As to quaternary structure, part of the 50S ribosomal subunit.

In Neisseria gonorrhoeae (strain NCCP11945), this protein is Large ribosomal subunit protein bL31B.